A 371-amino-acid chain; its full sequence is MSL complex subunit 3B (371 aa).

2 disordered regions span residues 1 to 44 (MATL…READ) and 160 to 229 (EERA…SPQA). The span at 8–44 (PKDDGEGKDEGGSDRGDGDPKPKGKKEVEAHTRREAD) shows a compositional bias: basic and acidic residues. One can recognise an MRG domain in the interval 44-367 (DERAVRIPIP…CEAHYSSKNP (324 aa)). The segment covering 206 to 216 (APRRSTRHSTH) has biased composition (basic residues).

Its subcellular location is the nucleus. In terms of biological role, probable non-catalytic component of the MSL histone acetyltransferase complex, a multiprotein complex that mediates the majority of histone H4 acetylation at 'Lys-16' (H4K16ac), an epigenetic mark that prevents chromatin compaction. In Rattus norvegicus (Rat), this protein is MSL complex subunit 3B.